The following is a 226-amino-acid chain: Probable GPI-anchored adhesin-like protein PGA28 (226 aa).

An N-terminal signal peptide occupies residues 1–26 (MKFFAYFAVIALSSASLINLFKRATA). The tract at residues 119-209 (DTEATTGSDT…SQQTSSHAGG (91 aa)) is disordered. The segment covering 131–148 (KAATGATTSAGTGVTKTS) has biased composition (low complexity). Positions 149 to 160 (ETGGVSSTANSE) are enriched in polar residues. Positions 161–208 (AKSGSVTTSKSGSTSISESKTTSGSSSSGKSSSSTSSASSQQTSSHAG) are enriched in low complexity. The GPI-anchor amidated serine moiety is linked to residue serine 197. A propeptide spans 198-226 (ASSQQTSSHAGGASGAFVSLLGLFAALLI) (removed in mature form).

Predicted to be a cleavage substrate for KEX2.

Its subcellular location is the cell membrane. In terms of biological role, putative adhesin which is involved in cell adhesion and virulence. Plays a role in Candida-bacterial interactions and subsequent regulation of filamentation. The sequence is that of Probable GPI-anchored adhesin-like protein PGA28 (PGA28) from Candida albicans (strain SC5314 / ATCC MYA-2876) (Yeast).